The primary structure comprises 78 residues: Large ribosomal subunit protein uL24 (78 aa).

The interval 52 to 78 (PSEKTPNGGHVNKEMPIDISNVAKVEG) is disordered.

This sequence belongs to the universal ribosomal protein uL24 family. In terms of assembly, part of the 50S ribosomal subunit.

In terms of biological role, one of two assembly initiator proteins, it binds directly to the 5'-end of the 23S rRNA, where it nucleates assembly of the 50S subunit. One of the proteins that surrounds the polypeptide exit tunnel on the outside of the subunit. The protein is Large ribosomal subunit protein uL24 of Campylobacter concisus (strain 13826).